We begin with the raw amino-acid sequence, 407 residues long: Imidazolonepropionase (407 aa).

His68 and His70 together coordinate Fe(3+). The Zn(2+) site is built by His68 and His70. 4-imidazolone-5-propanoate is bound by residues Arg77, Tyr140, and His173. Residue Tyr140 coordinates N-formimidoyl-L-glutamate. A Fe(3+)-binding site is contributed by His238. A Zn(2+)-binding site is contributed by His238. Residue Gln241 participates in 4-imidazolone-5-propanoate binding. Asp313 contributes to the Fe(3+) binding site. Asp313 contributes to the Zn(2+) binding site. N-formimidoyl-L-glutamate contacts are provided by Asn315 and Gly317. Thr318 is a 4-imidazolone-5-propanoate binding site.

The protein belongs to the metallo-dependent hydrolases superfamily. HutI family. It depends on Zn(2+) as a cofactor. Fe(3+) serves as cofactor.

The protein localises to the cytoplasm. It catalyses the reaction 4-imidazolone-5-propanoate + H2O = N-formimidoyl-L-glutamate. The protein operates within amino-acid degradation; L-histidine degradation into L-glutamate; N-formimidoyl-L-glutamate from L-histidine: step 3/3. Functionally, catalyzes the hydrolytic cleavage of the carbon-nitrogen bond in imidazolone-5-propanoate to yield N-formimidoyl-L-glutamate. It is the third step in the universal histidine degradation pathway. In Burkholderia lata (strain ATCC 17760 / DSM 23089 / LMG 22485 / NCIMB 9086 / R18194 / 383), this protein is Imidazolonepropionase.